The primary structure comprises 363 residues: DNA repair protein rlp1 (363 aa).

It belongs to the RecA family. RAD51 subfamily. In terms of assembly, interacts with rdl1 and sws1.

The protein localises to the cytoplasm. The protein resides in the nucleus. Its function is as follows. Required for normal levels of meiotic recombination. Acts in the recombinational pathway of double-strand break (DSB) repair together with rhp51, rhp55 and rad22. Required for the full extent of DNA recombination and cell survival under condition of a replication fork collapse. This chain is DNA repair protein rlp1, found in Schizosaccharomyces pombe (strain 972 / ATCC 24843) (Fission yeast).